The primary structure comprises 514 residues: Putative ankyrin repeat protein R863 (514 aa).

15 ANK repeats span residues 45–74 (AKID…LKHP), 84–114 (KSLN…DINS), 115–144 (KKNR…DVRA), 146–174 (KDYA…NIKV), 176–204 (DNFA…NIRA), 205–234 (DNNY…DIRA), 236–264 (NNYA…NVKS), 266–294 (NDCA…DVRS), 295–324 (ENDY…NVRA), 325–354 (DNNY…NIRS), 356–384 (NDYA…NFKS), 385–414 (DYDC…DIRV), 415–444 (NNDY…DIRA), 446–474 (NDYA…NVKA), and 476–504 (NNYA…DVRS).

The sequence is that of Putative ankyrin repeat protein R863 from Acanthamoeba polyphaga mimivirus (APMV).